Consider the following 474-residue polypeptide: Bifunctional protein HldE (474 aa).

The segment at 1–318 (MKLSMPRFDQ…RAVQREQGSE (318 aa)) is ribokinase. 194–197 (NLSE) is an ATP binding site. The active site involves D263. The cytidylyltransferase stretch occupies residues 343 to 474 (FTNGCFDILH…AIVEKIRQKG (132 aa)).

This sequence in the N-terminal section; belongs to the carbohydrate kinase PfkB family. In the C-terminal section; belongs to the cytidylyltransferase family. Homodimer.

It carries out the reaction D-glycero-beta-D-manno-heptose 7-phosphate + ATP = D-glycero-beta-D-manno-heptose 1,7-bisphosphate + ADP + H(+). The catalysed reaction is D-glycero-beta-D-manno-heptose 1-phosphate + ATP + H(+) = ADP-D-glycero-beta-D-manno-heptose + diphosphate. It functions in the pathway nucleotide-sugar biosynthesis; ADP-L-glycero-beta-D-manno-heptose biosynthesis; ADP-L-glycero-beta-D-manno-heptose from D-glycero-beta-D-manno-heptose 7-phosphate: step 1/4. Its pathway is nucleotide-sugar biosynthesis; ADP-L-glycero-beta-D-manno-heptose biosynthesis; ADP-L-glycero-beta-D-manno-heptose from D-glycero-beta-D-manno-heptose 7-phosphate: step 3/4. The protein operates within bacterial outer membrane biogenesis; LPS core biosynthesis. Catalyzes the phosphorylation of D-glycero-D-manno-heptose 7-phosphate at the C-1 position to selectively form D-glycero-beta-D-manno-heptose-1,7-bisphosphate. Its function is as follows. Catalyzes the ADP transfer from ATP to D-glycero-beta-D-manno-heptose 1-phosphate, yielding ADP-D-glycero-beta-D-manno-heptose. The sequence is that of Bifunctional protein HldE from Pseudomonas aeruginosa (strain ATCC 15692 / DSM 22644 / CIP 104116 / JCM 14847 / LMG 12228 / 1C / PRS 101 / PAO1).